We begin with the raw amino-acid sequence, 219 residues long: uncharacterized protein (219 aa).

Residues 1 to 15 (MYVLFLLSWVLVAGA) form the signal peptide. An N-linked (GlcNAc...) asparagine glycan is attached at N118. Residues 138–174 (GEVGEDPGKRARKRRLGLPIGEPGEDVGKRMRQRQQG) form a disordered region.

In terms of tissue distribution, component of the acid-insoluble and acid-soluble organic matrix of calcified layers of the shell (at protein level).

It is found in the secreted. This is an uncharacterized protein from Lottia gigantea (Giant owl limpet).